Here is a 152-residue protein sequence, read N- to C-terminus: Deoxyuridine 5'-triphosphate nucleotidohydrolase (152 aa).

Substrate contacts are provided by residues 71–73, N84, 88–90, and M98; these read RSG and LID.

It belongs to the dUTPase family. The cofactor is Mg(2+).

It carries out the reaction dUTP + H2O = dUMP + diphosphate + H(+). It participates in pyrimidine metabolism; dUMP biosynthesis; dUMP from dCTP (dUTP route): step 2/2. This enzyme is involved in nucleotide metabolism: it produces dUMP, the immediate precursor of thymidine nucleotides and it decreases the intracellular concentration of dUTP so that uracil cannot be incorporated into DNA. This Shewanella woodyi (strain ATCC 51908 / MS32) protein is Deoxyuridine 5'-triphosphate nucleotidohydrolase.